The chain runs to 700 residues: Elongation factor G 2 (700 aa).

The 283-residue stretch at 8-290 folds into the tr-type G domain; the sequence is ERYRNIGISA…AVIDFLPSPV (283 aa). Residues 17–24, 88–92, and 142–145 contribute to the GTP site; these read AHIDAGKT, DTPGH, and NKMD.

This sequence belongs to the TRAFAC class translation factor GTPase superfamily. Classic translation factor GTPase family. EF-G/EF-2 subfamily.

It is found in the cytoplasm. Functionally, catalyzes the GTP-dependent ribosomal translocation step during translation elongation. During this step, the ribosome changes from the pre-translocational (PRE) to the post-translocational (POST) state as the newly formed A-site-bound peptidyl-tRNA and P-site-bound deacylated tRNA move to the P and E sites, respectively. Catalyzes the coordinated movement of the two tRNA molecules, the mRNA and conformational changes in the ribosome. The chain is Elongation factor G 2 from Burkholderia orbicola (strain AU 1054).